The following is a 251-amino-acid chain: Probable transcriptional regulatory protein Amuc_0709 (251 aa).

Belongs to the TACO1 family.

Its subcellular location is the cytoplasm. In Akkermansia muciniphila (strain ATCC BAA-835 / DSM 22959 / JCM 33894 / BCRC 81048 / CCUG 64013 / CIP 107961 / Muc), this protein is Probable transcriptional regulatory protein Amuc_0709.